The sequence spans 386 residues: 2-deoxy-scyllo-inosose synthase (386 aa).

Residues Asp-42, 73-76 (EVHK), 105-109 (GITGN), 129-130 (TT), 140-142 (SLK), and 151-152 (KN) each bind NAD(+). The active site involves Lys-142. Glu-184 is a Co(2+) binding site. The active site involves Glu-244. Residues His-247 and His-263 each contribute to the Co(2+) site.

Belongs to the sugar phosphate cyclases superfamily. DOI synthase family. NAD(+) is required as a cofactor. Requires Co(2+) as cofactor.

The enzyme catalyses D-glucose 6-phosphate = 2-deoxy-L-scyllo-inosose + phosphate. Its pathway is metabolic intermediate biosynthesis; 2-deoxystreptamine biosynthesis; 2-deoxystreptamine from D-glucose 6-phosphate: step 1/4. It functions in the pathway antibiotic biosynthesis; paromomycin biosynthesis. Catalyzes the intramolecular carbocycle formation from D-glucose-6-phosphate to 2-deoxy-scyllo-inosose (DOI). In Streptomyces paromomycinus (Streptomyces rimosus subsp. paromomycinus), this protein is 2-deoxy-scyllo-inosose synthase (parC).